Here is a 446-residue protein sequence, read N- to C-terminus: Chromogranin-A (446 aa).

Residues Ser1–Ala16 form the signal peptide. A disulfide bridge connects residues Cys33 and Cys54. The interval Ala85 to Leu426 is disordered. Ser97 carries the phosphoserine modification. Over residues Val105–Glu138 the composition is skewed to basic and acidic residues. The segment covering Glu160 to Ala171 has biased composition (acidic residues). Phosphoserine is present on Ser209. A compositionally biased stretch (basic and acidic residues) spans Ala226–Asp243. Ser286 carries the phosphoserine modification. Gly304 carries the post-translational modification Glycine amide. The residue at position 319 (Ser319) is a Phosphoserine. Residues Ser319–Gly346 show a composition bias toward basic and acidic residues. Positions Glu347–Pro357 are enriched in acidic residues. Residue Ser360 is modified to Phosphoserine. Position 361 is a methionine sulfoxide (Met361). Phosphoserine occurs at positions 387, 391, 413, and 427. Residues Tyr403 to Asp420 are compositionally biased toward basic and acidic residues. Residue Ser413 is glycosylated (O-linked (Xyl...) (chondroitin sulfate) serine).

Belongs to the chromogranin/secretogranin protein family. In terms of assembly, self-interacts; self-assembly is promoted in vitro by chondroitin sulfate attachment which occurs at mildly acidic pH conditions. Interacts with SCG3. Interacts with ITPR1 in the secretory granules. In terms of processing, O-glycosylated; contains chondroitin sulfate (CS). CS attachment is pH-dependent, being observed at mildly acidic conditions of pH 5 but not at neutral pH, and promotes self-assembly in vitro. Parathyroid CHGA is sulfated on tyrosine residues, whereas adrenal CHGA seems to be mainly sulfated on oligosaccharide residues.

It is found in the secreted. It localises to the cytoplasmic vesicle. Its subcellular location is the secretory vesicle. The protein localises to the neuronal dense core vesicle. Functionally, strongly inhibits glucose induced insulin release from the pancreas. Its function is as follows. Inhibits low calcium-stimulated parathyroid cell secretion. Inhibits catecholamine release from chromaffin cells and noradrenergic neurons by acting as a non-competitive nicotinic cholinergic antagonist. Can induce mast cell migration, degranulation and production of cytokines and chemokines. In terms of biological role, regulates granule biogenesis in endocrine cells by up-regulating the transcription of protease nexin 1 (SERPINE2) via a cAMP-PKA-SP1 pathway. This leads to inhibition of granule protein degradation in the Golgi complex which in turn promotes granule formation. In Sus scrofa (Pig), this protein is Chromogranin-A (CHGA).